The following is a 322-amino-acid chain: MPGTAVHFNELELFFRQTRFAELVQYFVEMDDDSDDAEAVFPTSEPSRVSEGSENESGSGEEYEGAPHVHFQESTATEEPRTPSKTPASQTTQSIGRTVSIAEATRRASQESPRQTETAGSSSAPDALSTQQPPLEHSTQQNIPTKLPSTQQAVERVVSSQTTSRAAETRERSPEHTEASTQEAETAEEALNKEEFWNLYRSLESKSYISRENVPDIRLLVMCLKANLEIQGEFDRRRVGLKNRLYIILKDLVEEPWELRAYRGCRSADGLTLSVSFKYKNRPQFSGVKVDLEPKFLQESVVNIYYTISFTVRNVRPLTHSV.

Residues 35 to 188 are disordered; that stretch reads DDAEAVFPTS…ASTQEAETAE (154 aa). Composition is skewed to polar residues over residues 72–97 and 110–166; these read QEST…SIGR and QESP…TSRA. Residues 167–178 show a composition bias toward basic and acidic residues; that stretch reads AETRERSPEHTE.

In terms of biological role, plasmid partition require REP1, REP2, and a cis-acting DNA sequence (known as STB). REP1 may act by intercalating in the yeast nuclear matrix and binding STB either directly or via REP2. The polypeptide is Trans-acting factor B (B) (Zygosaccharomyces bisporus).